The following is a 471-amino-acid chain: Heat shock 70 kDa protein 13 (471 aa).

A signal peptide spans 1-22; that stretch reads MAGEMTILGSAVLTLLLAGYLA. Positions 315-337 are disordered; sequence ENDRKGPPTSDSELPKDKFSQAN.

It belongs to the heat shock protein 70 family. As to quaternary structure, binds UBQLN2.

It localises to the microsome. It is found in the endoplasmic reticulum. Its function is as follows. Has peptide-independent ATPase activity. This Bos taurus (Bovine) protein is Heat shock 70 kDa protein 13 (HSPA13).